The chain runs to 736 residues: Zinc finger MYND domain-containing protein 15 (736 aa).

Disordered regions lie at residues 70–94 and 109–192; these read SLGQ…DEPP and LEDG…KNAE. Acidic residues predominate over residues 110–123; that stretch reads EDGEEGEEEEEDEE. Composition is skewed to basic and acidic residues over residues 124 to 135 and 165 to 185; these read HGERPGMEKVEP and ASRE…PEKR. 8 residues coordinate Zn(2+): C307, C310, C322, C325, C331, C335, H349, and C353. An MYND-type zinc finger spans residues 307–353; it reads CHVCHKHSFEVKLTPCPQCSAVLYCGEACLQADWRRCPDDVSHRFWC. Disordered regions lie at residues 556–583 and 696–736; these read DGPE…GGRR and GGTV…RRRR. Residues 704–718 are compositionally biased toward pro residues; that stretch reads GPAPRPPTPAAPPVP. Basic residues predominate over residues 719 to 736; that stretch reads ARRRRGEKKAARGPRRRR.

As to quaternary structure, interacts with HDAC1, HDAC3, HDAC6 and, to a lesser extent, with HDAC7. As to expression, testis-specific. Expressed in pachytene spermatocytes and all developing spermatids, but not in Sertoli, nor Leydig cells (at protein level).

Its subcellular location is the nucleus. It localises to the cytoplasm. Acts as a transcriptional repressor through interaction with histone deacetylases (HDACs). May regulate haploid genes important for spermiogenesis. The sequence is that of Zinc finger MYND domain-containing protein 15 (Zmynd15) from Mus musculus (Mouse).